Here is a 292-residue protein sequence, read N- to C-terminus: Feruloyl esterase B (292 aa).

Positions 1 to 18 (MLPRTLLGLALTAATGLC) are cleaved as a signal peptide. Residues Asn88, Asn117, Asn179, and Asn245 are each glycosylated (N-linked (GlcNAc...) asparagine).

It belongs to the carbohydrate esterase 1 (CE1) family. Feruloyl esterase type B subfamily.

It is found in the secreted. It catalyses the reaction feruloyl-polysaccharide + H2O = ferulate + polysaccharide.. In terms of biological role, involved in degradation of plant cell walls. Hydrolyzes of the feruloyl-arabinose ester bond in arabinoxylans as well as the feruloyl-galactose and feruloyl-arabinose ester bonds in pectin. This is Feruloyl esterase B (fae-1) from Neurospora crassa (strain ATCC 24698 / 74-OR23-1A / CBS 708.71 / DSM 1257 / FGSC 987).